The primary structure comprises 405 residues: Octaketide synthase 3 (405 aa).

Residues Met-1 to Leu-10 show a composition bias toward polar residues. The interval Met-1 to Ala-22 is disordered. Cys-176 is a catalytic residue. CoA is bound by residues Ser-283 and Gly-320–Ala-323.

The protein belongs to the thiolase-like superfamily. Chalcone/stilbene synthases family. As to quaternary structure, homodimer.

It participates in secondary metabolite biosynthesis; flavonoid biosynthesis. Catalyzes the iterative condensations of 8 molecules of malonyl-CoA to produce aromatic octaketides, SEK4 and SEK4b, the products of the minimal polyketide synthase for the benzoisochromanequinone actinorhodin. May be involved in the biosynthesis of the octaketide barbaloin. This Aloe arborescens (Kidachi aloe) protein is Octaketide synthase 3 (PKS5).